We begin with the raw amino-acid sequence, 141 residues long: Large ribosomal subunit protein uL11 (141 aa).

The protein belongs to the universal ribosomal protein uL11 family. In terms of assembly, part of the ribosomal stalk of the 50S ribosomal subunit. Interacts with L10 and the large rRNA to form the base of the stalk. L10 forms an elongated spine to which L12 dimers bind in a sequential fashion forming a multimeric L10(L12)X complex. In terms of processing, one or more lysine residues are methylated.

Functionally, forms part of the ribosomal stalk which helps the ribosome interact with GTP-bound translation factors. This Helicobacter acinonychis (strain Sheeba) protein is Large ribosomal subunit protein uL11.